The sequence spans 525 residues: Glucose-6-phosphate isomerase (525 aa).

Glu-347 serves as the catalytic Proton donor. Catalysis depends on residues His-378 and Lys-493.

Belongs to the GPI family.

It is found in the cytoplasm. It carries out the reaction alpha-D-glucose 6-phosphate = beta-D-fructose 6-phosphate. It participates in carbohydrate biosynthesis; gluconeogenesis. It functions in the pathway carbohydrate degradation; glycolysis; D-glyceraldehyde 3-phosphate and glycerone phosphate from D-glucose: step 2/4. In terms of biological role, catalyzes the reversible isomerization of glucose-6-phosphate to fructose-6-phosphate. The protein is Glucose-6-phosphate isomerase of Chlamydia trachomatis serovar D (strain ATCC VR-885 / DSM 19411 / UW-3/Cx).